Reading from the N-terminus, the 584-residue chain is Outer membrane transporter CdiB-2 (584 aa).

The signal sequence occupies residues 1–20 (MATRFAILPVTALITLTAQA). Positions 24–44 (PTPNDQAAAARANAEQNQQAQ) are enriched in low complexity. Residues 24–72 (PTPNDQAAAARANAEQNQQAQQRRDAQQRDATVQAPGVRSDVPRPEAYP) form a disordered region. One can recognise a POTRA domain in the interval 98–171 (SKAQGASALP…GALKLALIPG (74 aa)).

Belongs to the TPS (TC 1.B.20) family.

The protein resides in the cell outer membrane. Functionally, potential outer membrane protein component of a toxin-immunity protein module, which functions as a cellular contact-dependent growth inhibition (CDI) system. CDI modules allow bacteria to communicate with and inhibit the growth of closely related neighboring bacteria in a contact-dependent fashion. This protein may be required for secretion and assembly of the CdiA toxin protein. In terms of biological role, expression of this cdiAIB locus in B.thailandensis confers protection against other bacteria carrying the locus; growth inhibition requires cellular contact. Its function is as follows. Probable member of a two partner secretion pathway (TPS) in which it mediates the secretion of CdiA2. In Burkholderia pseudomallei (strain 1026b), this protein is Outer membrane transporter CdiB-2 (cdiB2).